The following is a 707-amino-acid chain: Complement C1r-A subcomponent (707 aa).

The first 16 residues, 1-16 (MWLFALLVTLFYGVEG), serve as a signal peptide directing secretion. A CUB 1 domain is found at 17-140 (SIYLPQKLYG…KGFLAYYQAV (124 aa)). Ca(2+) is bound by residues glutamate 65, aspartate 73, and aspartate 118. Cysteines 70 and 88 form a disulfide. Asparagine 124 carries N-linked (GlcNAc...) asparagine glycosylation. 3 residues coordinate Ca(2+): aspartate 141, leucine 142, and glutamate 144. In terms of domain architecture, EGF-like; calcium-binding spans 141–189 (DLDECASQPNSVEEGLQPRCQHLCHNYVGGYFCSCHPGYELQKDGQSCQ). Cystine bridges form between cysteine 145-cysteine 164, cysteine 160-cysteine 173, cysteine 175-cysteine 188, and cysteine 192-cysteine 219. Ca(2+)-binding residues include asparagine 166, tyrosine 167, and glycine 170. (3R)-3-hydroxyasparagine is present on asparagine 166. A CUB 2 domain is found at 192 to 304 (CSSELYTEPS…RGWKLHYTTE (113 aa)). Serine 205 carries the post-translational modification Phosphoserine; by CK2. A glycan (N-linked (GlcNAc...) asparagine) is linked at asparagine 220. Ca(2+) contacts are provided by aspartate 242, aspartate 252, aspartate 289, and aspartate 293. Residues cysteine 249 and cysteine 267 are joined by a disulfide bond. 2 Sushi domains span residues 306–372 (IKCP…RCKI) and 373–448 (KNCG…RCLP). Disulfide bonds link cysteine 308–cysteine 357, cysteine 337–cysteine 370, cysteine 375–cysteine 428, cysteine 405–cysteine 446, and cysteine 450–cysteine 579. In terms of domain architecture, Peptidase S1 spans 463 to 704 (IIRGQPARPG…YVDWIKKEMG (242 aa)). Residues histidine 501 and aspartate 559 each act as charge relay system in the active site. N-linked (GlcNAc...) asparagine glycosylation is present at asparagine 583. 2 disulfide bridges follow: cysteine 622–cysteine 641 and cysteine 652–cysteine 682. Serine 656 serves as the catalytic Charge relay system.

This sequence belongs to the peptidase S1 family. In terms of assembly, core component of the complement C1 complex, a calcium-dependent complex composed of 1 molecule of the C1Q subcomplex, 2 molecules of C1R and 2 molecules of C1S. The C1Q subcomplex is composed 18 subunits: 3 chains of C1QA, C1QB, and C1QC trimerize to form 6 collagen-like triple helices connected to six globular ligand-recognition modules. Within the C1 complex, C1R is a dimer of identical chains, each of which is activated by cleavage into two chains, heavy and light, connected by disulfide bonds. In terms of processing, cleaved and activated by autocatalytic processing to generate Complement C1r subcomponent heavy and light chains that are connected by disulfide bonds. Post-translationally, the iron and 2-oxoglutarate dependent 3-hydroxylation of aspartate and asparagine is (R) stereospecific within EGF domains.

It localises to the secreted. It is found in the cell surface. It catalyses the reaction Selective cleavage of Lys(or Arg)-|-Ile bond in complement subcomponent C1s to form the active form of C1s (EC 3.4.21.42).. With respect to regulation, activated by the C1Q subcomplex of the C1 complex following C1Q binding to immunoglobulins (IgG or IgM) complexed with antigens to form antigen-antibody complexes on the surface of pathogens. Immunoglobulin-binding promotes autoactivation of C1R, which results in the cleavage of the Arg-Ile bond in the catalytic domain. Serine protease component of the complement C1 complex, a multiprotein complex that initiates the classical pathway of the complement system, a cascade of proteins that leads to phagocytosis and breakdown of pathogens and signaling that strengthens the adaptive immune system. C1R catalyzes the first enzymatic step in the classical complement pathway: it is activated by the C1Q subcomplex of the C1 complex, which associates with IgG or IgM immunoglobulins complexed with antigens to form antigen-antibody complexes on the surface of pathogens. Immunoglobulin-binding promotes the autocatalytic cleavage and activation of C1R. Activated C1R then cleaves and activates C1S, the second protease of the classical complement pathway. It is unclear if C1R activates C1S within single, strained C1 complexes or between neighboring C1 complexes on surfaces. The chain is Complement C1r-A subcomponent (C1ra) from Mus musculus (Mouse).